Reading from the N-terminus, the 675-residue chain is Electrogenic aspartate/glutamate antiporter SLC25A13, mitochondrial (675 aa).

Ala2 carries the N-acetylalanine modification. Residues 2–295 (AAAKVALTKR…TLADIERIAP (294 aa)) are regulatory N-terminal domain. Topologically, residues 2–331 (AAAKVALTKR…LLQVAESAYR (330 aa)) are mitochondrial intermembrane. EF-hand domains are found at residues 51–86 (SQPNPKTVELLSGVVDQTKDGLISFQEFVAFESVLC), 87–122 (APDALFMVAFQLFDKAGKGEVTFEDVKQVFGQTTIH), 125–157 (IPFNWDSEFVQLHFGKERKRHLTYAEFTQFLLE), and 158–193 (IQLEHAKQAFVQRDNARTGRVTAIDFRDIMVTIRPH). Residues Asp66, Thr68, Asp70, Leu72, and Glu77 each contribute to the Ca(2+) site. The linker loop domain stretch occupies residues 296-311 (LEEGTLPFNLAEAQRQ). The carrier domain stretch occupies residues 321 to 612 (VLLQVAESAY…LQRWFYIDFG (292 aa)). 3 Solcar repeats span residues 326–418 (AESA…VRDK), 426–510 (VPLA…VKAS), and 518–606 (VSPG…LQRW). A helical transmembrane segment spans residues 332–349 (FGLGSVAGAVGATAVYPI). The Mitochondrial matrix portion of the chain corresponds to 350-392 (DLVKTRMQNQRSTGSFVGELMYKNSFDCFKKVLRYEGFFGLYR). 2 positions are modified to N6-acetyllysine: Lys353 and Lys372. A helical transmembrane segment spans residues 393-412 (GLLPQLLGVAPEKAIKLTVN). The Mitochondrial intermembrane portion of the chain corresponds to 413 to 435 (DFVRDKFMHKDGSVPLAAEILAG). A helical transmembrane segment spans residues 436-449 (GCAGGSQVIFTNPL). At 450–484 (EIVKIRLQVAGEITTGPRVSALSVVRDLGFFGIYK) the chain is on the mitochondrial matrix side. Lys453 is subject to N6-methyllysine. Lys484 is subject to N6-acetyllysine; alternate. N6-succinyllysine; alternate is present on Lys484. A helical membrane pass occupies residues 485 to 504 (GAKACFLRDIPFSAIYFPCY). Topologically, residues 505–523 (AHVKASFANEDGQVSPGSL) are mitochondrial intermembrane. The chain crosses the membrane as a helical span at residues 524–541 (LLAGAIAGMPAASLVTPA). Over 542 to 580 (DVIKTRLQVAARAGQTTYSGVIDCFRKILREEGPKALWK) the chain is Mitochondrial matrix. At Lys580 the chain carries N6-succinyllysine. Residues 581 to 600 (GAGARVFRSSPQFGVTLLTY) form a helical membrane-spanning segment. Residues 601–675 (ELLQRWFYID…STSKAIGGGP (75 aa)) are Mitochondrial intermembrane-facing. The segment at 613 to 675 (GVKPMGSEPV…STSKAIGGGP (63 aa)) is C-terminal domain. Lys662 carries the post-translational modification N6-acetyllysine. Position 666 is a phosphoserine (Ser666).

This sequence belongs to the mitochondrial carrier (TC 2.A.29) family. As to quaternary structure, homodimer (via N-terminus). High levels in liver and low levels in kidney, pancreas, placenta, heart and brain.

The protein resides in the mitochondrion inner membrane. The catalysed reaction is L-aspartate(in) + L-glutamate(out) + H(+)(out) = L-aspartate(out) + L-glutamate(in) + H(+)(in). It carries out the reaction 3-sulfino-L-alanine(out) + L-glutamate(in) + H(+)(in) = 3-sulfino-L-alanine(in) + L-glutamate(out) + H(+)(out). It catalyses the reaction 3-sulfino-L-alanine(out) + L-aspartate(in) = 3-sulfino-L-alanine(in) + L-aspartate(out). With respect to regulation, activated by calcium-binding in the mitochondrial intermembrane space. Inhibited by pyridoxal 5'-phosphate, bathophenathroline, mercurials, diethyl pyrocarbonate and N-ethylmaleimide. Functionally, mitochondrial electrogenic aspartate/glutamate antiporter that favors efflux of aspartate and entry of glutamate and proton within the mitochondria as part of the malate-aspartate shuttle. Also mediates the uptake of L-cysteinesulfinate (3-sulfino-L-alanine) by mitochondria in exchange of L-glutamate and proton. Can also exchange L-cysteinesulfinate with aspartate in their anionic form without any proton translocation. Lacks transport activity towards gamma-aminobutyric acid (GABA). This chain is Electrogenic aspartate/glutamate antiporter SLC25A13, mitochondrial, found in Homo sapiens (Human).